A 451-amino-acid polypeptide reads, in one-letter code: SH2 domain-containing protein 7 (451 aa).

The SH2 domain maps to 51–142 (WFHGFITRKQ…PFKEMLTAAC (92 aa)). Disordered regions lie at residues 180–232 (KAAS…SLLE), 256–321 (LGTE…SDAM), and 408–436 (GTPE…THKP). Residues 221–232 (SPLPEKSSSLLE) are compositionally biased toward low complexity. The segment covering 279-291 (EAQRRLSDGEQNR) has biased composition (basic and acidic residues). The segment covering 306–316 (QGPTESPTSWG) has biased composition (polar residues). The segment covering 426-436 (KSKETGRTHKP) has biased composition (basic and acidic residues).

The chain is SH2 domain-containing protein 7 (SH2D7) from Homo sapiens (Human).